A 249-amino-acid chain; its full sequence is 2,3-bisphosphoglycerate-dependent phosphoglycerate mutase (249 aa).

Residues 9 to 16 (RHGQSQWN), 22 to 23 (TG), Arg-61, 88 to 91 (ERHY), Lys-99, 115 to 116 (RR), and 184 to 185 (GN) contribute to the substrate site. Residue His-10 is the Tele-phosphohistidine intermediate of the active site. Glu-88 serves as the catalytic Proton donor/acceptor.

The protein belongs to the phosphoglycerate mutase family. BPG-dependent PGAM subfamily. As to quaternary structure, homodimer.

The catalysed reaction is (2R)-2-phosphoglycerate = (2R)-3-phosphoglycerate. It participates in carbohydrate degradation; glycolysis; pyruvate from D-glyceraldehyde 3-phosphate: step 3/5. In terms of biological role, catalyzes the interconversion of 2-phosphoglycerate and 3-phosphoglycerate. This is 2,3-bisphosphoglycerate-dependent phosphoglycerate mutase from Xylella fastidiosa (strain M23).